The following is a 512-amino-acid chain: ATP synthase subunit alpha (512 aa).

ATP is bound at residue Gly-169–Thr-176.

It belongs to the ATPase alpha/beta chains family. F-type ATPases have 2 components, CF(1) - the catalytic core - and CF(0) - the membrane proton channel. CF(1) has five subunits: alpha(3), beta(3), gamma(1), delta(1), epsilon(1). CF(0) has three main subunits: a(1), b(2) and c(9-12). The alpha and beta chains form an alternating ring which encloses part of the gamma chain. CF(1) is attached to CF(0) by a central stalk formed by the gamma and epsilon chains, while a peripheral stalk is formed by the delta and b chains.

The protein localises to the cell inner membrane. The catalysed reaction is ATP + H2O + 4 H(+)(in) = ADP + phosphate + 5 H(+)(out). Produces ATP from ADP in the presence of a proton gradient across the membrane. The alpha chain is a regulatory subunit. This Orientia tsutsugamushi (strain Ikeda) (Rickettsia tsutsugamushi) protein is ATP synthase subunit alpha.